Reading from the N-terminus, the 465-residue chain is Probable Xaa-Pro aminopeptidase pepP (465 aa).

Residues aspartate 263, aspartate 274, glutamate 397, and glutamate 437 each contribute to the Mn(2+) site.

It belongs to the peptidase M24B family. Requires Mn(2+) as cofactor.

The catalysed reaction is Release of any N-terminal amino acid, including proline, that is linked to proline, even from a dipeptide or tripeptide.. Functionally, catalyzes the removal of a penultimate prolyl residue from the N-termini of peptides. The polypeptide is Probable Xaa-Pro aminopeptidase pepP (pepP) (Penicillium rubens (strain ATCC 28089 / DSM 1075 / NRRL 1951 / Wisconsin 54-1255) (Penicillium chrysogenum)).